The primary structure comprises 286 residues: Pantothenate synthetase (286 aa).

Residue 30 to 37 coordinates ATP; that stretch reads MGNLHSGH. Catalysis depends on histidine 37, which acts as the Proton donor. Position 61 (glutamine 61) interacts with (R)-pantoate. Glutamine 61 is a beta-alanine binding site. 149-152 contacts ATP; sequence GQKD. Glutamine 155 is a binding site for (R)-pantoate. ATP contacts are provided by residues valine 178 and 186 to 189; that span reads LSSR.

It belongs to the pantothenate synthetase family. In terms of assembly, homodimer.

The protein localises to the cytoplasm. The enzyme catalyses (R)-pantoate + beta-alanine + ATP = (R)-pantothenate + AMP + diphosphate + H(+). It participates in cofactor biosynthesis; (R)-pantothenate biosynthesis; (R)-pantothenate from (R)-pantoate and beta-alanine: step 1/1. In terms of biological role, catalyzes the condensation of pantoate with beta-alanine in an ATP-dependent reaction via a pantoyl-adenylate intermediate. In Pseudomonas fluorescens (strain ATCC BAA-477 / NRRL B-23932 / Pf-5), this protein is Pantothenate synthetase.